We begin with the raw amino-acid sequence, 290 residues long: Fructose-1,6-bisphosphatase class 1 (290 aa).

Positions 78, 96, 98, and 99 each coordinate Mg(2+). Substrate-binding positions include 99–102 (DGSS), Tyr-201, and Lys-226. Residue Glu-232 participates in Mg(2+) binding.

Belongs to the FBPase class 1 family. In terms of assembly, homotetramer. Requires Mg(2+) as cofactor.

The protein localises to the cytoplasm. It catalyses the reaction beta-D-fructose 1,6-bisphosphate + H2O = beta-D-fructose 6-phosphate + phosphate. Its pathway is carbohydrate biosynthesis; gluconeogenesis. The sequence is that of Fructose-1,6-bisphosphatase class 1 from Helicobacter acinonychis (strain Sheeba).